Here is a 206-residue protein sequence, read N- to C-terminus: Large ribosomal subunit protein eL13z (206 aa).

The disordered stretch occupies residues 185–206 (TNKRHAGARAKRAAEAEKEEKK). Residues 186-195 (NKRHAGARAK) show a composition bias toward basic residues. Residues 196–206 (RAAEAEKEEKK) are compositionally biased toward basic and acidic residues.

The protein belongs to the eukaryotic ribosomal protein eL13 family.

It is found in the cytoplasm. This Arabidopsis thaliana (Mouse-ear cress) protein is Large ribosomal subunit protein eL13z (RPL13B).